The following is a 149-amino-acid chain: 3-dehydroquinate dehydratase (149 aa).

The active-site Proton acceptor is Y26. Substrate contacts are provided by N78, H84, and D91. H104 acts as the Proton donor in catalysis. Substrate-binding positions include 105–106 (IS) and R115.

The protein belongs to the type-II 3-dehydroquinase family. Homododecamer.

It catalyses the reaction 3-dehydroquinate = 3-dehydroshikimate + H2O. It functions in the pathway metabolic intermediate biosynthesis; chorismate biosynthesis; chorismate from D-erythrose 4-phosphate and phosphoenolpyruvate: step 3/7. Functionally, catalyzes a trans-dehydration via an enolate intermediate. In Buchnera aphidicola subsp. Schizaphis graminum (strain Sg), this protein is 3-dehydroquinate dehydratase (aroQ).